Consider the following 222-residue polypeptide: Large ribosomal subunit protein uL11c (222 aa).

Residues 1 to 20 (MASSSLSTLCSSTSSSLHPN) form a disordered region. Residues 1–62 (MASSSLSTLC…TPRFLTVIAM (62 aa)) constitute a chloroplast transit peptide.

It belongs to the universal ribosomal protein uL11 family. Part of the ribosomal stalk of the 50S ribosomal subunit. Interacts with L10 and the large rRNA to form the base of the stalk. L10 forms an elongated spine to which L12 dimers bind in a sequential fashion forming a multimeric L10(L12)X complex.

The protein resides in the plastid. It is found in the chloroplast. Its function is as follows. Forms part of the ribosomal stalk which helps the ribosome interact with GTP-bound translation factors. In Arabidopsis thaliana (Mouse-ear cress), this protein is Large ribosomal subunit protein uL11c (RPL11).